We begin with the raw amino-acid sequence, 312 residues long: 4-diphosphocytidyl-2-C-methyl-D-erythritol kinase (312 aa).

Lys-10 is an active-site residue. 105–115 (PVAGGMAGGSA) provides a ligand contact to ATP. Residue Asp-146 is part of the active site.

The protein belongs to the GHMP kinase family. IspE subfamily.

The catalysed reaction is 4-CDP-2-C-methyl-D-erythritol + ATP = 4-CDP-2-C-methyl-D-erythritol 2-phosphate + ADP + H(+). It functions in the pathway isoprenoid biosynthesis; isopentenyl diphosphate biosynthesis via DXP pathway; isopentenyl diphosphate from 1-deoxy-D-xylulose 5-phosphate: step 3/6. Functionally, catalyzes the phosphorylation of the position 2 hydroxy group of 4-diphosphocytidyl-2C-methyl-D-erythritol. The protein is 4-diphosphocytidyl-2-C-methyl-D-erythritol kinase of Corynebacterium glutamicum (strain R).